A 308-amino-acid polypeptide reads, in one-letter code: Lysophosphatidic acid receptor 6 (308 aa).

Residues 1–16 are Extracellular-facing; that stretch reads MVSSNCSTEDSFKYTL. N-linked (GlcNAc...) asparagine glycosylation is present at asparagine 5. The chain crosses the membrane as a helical span at residues 17–43; sequence YGCVFSMVFVLGLIANCVAIYIFTFTL. Topologically, residues 44-52 are cytoplasmic; that stretch reads KVRNETTTY. Residues 53–76 traverse the membrane as a helical segment; it reads MLNLAISDLLFVFTLPFRIYYFVV. The Extracellular portion of the chain corresponds to 77 to 89; sequence RNWPFGDVLCKIS. A disulfide bridge connects residues cysteine 86 and cysteine 165. A helical transmembrane segment spans residues 90 to 109; it reads VTLFYTNMYGSILFLTCISV. Residues 110–130 lie on the Cytoplasmic side of the membrane; the sequence is DRFLAIVHPFRSKTLRTKRNA. Residues 131-151 traverse the membrane as a helical segment; that stretch reads RIVCVAVWITVLAGSTPASFF. At 152 to 178 the chain is on the extracellular side; sequence QSTNRQNNTEQRTCFENFPESTWKTYL. A helical membrane pass occupies residues 179–206; it reads SRIVIFIEIVGFFIPLILNVTCSTMVLR. The Cytoplasmic portion of the chain corresponds to 207-224; sequence TLNKPLTLSRNKLSKKKV. Residues 225–250 traverse the membrane as a helical segment; that stretch reads LKMIFVHLVIFCFCFVPYNITLILYS. The Extracellular segment spans residues 251-269; it reads LMRTQTWINCSVVTAVRTM. The chain crosses the membrane as a helical span at residues 270 to 289; that stretch reads YPVTLCIAVSNCCFDPIVYY. The S-palmitoyl cysteine moiety is linked to residue cysteine 281. Over 290–308 the chain is Cytoplasmic; it reads FTSDTNSELDKKQQVHQNT.

This sequence belongs to the G-protein coupled receptor 1 family. In terms of tissue distribution, induced in activated T-cells.

Its subcellular location is the cell membrane. Its function is as follows. Binds to oleoyl-L-alpha-lysophosphatidic acid (LPA). Intracellular cAMP is involved in the receptor activation. The chain is Lysophosphatidic acid receptor 6 (LPAR6) from Gallus gallus (Chicken).